The sequence spans 40 residues: Snaclec tokaracetin subunit alpha (40 aa).

Residues 1 to 40 (DCPSGWSSFKQYCYKPFKQLKTWEDAERFCLEQVKGAHLV) enclose the C-type lectin domain. Cys2 and Cys13 form a disulfide bridge.

The protein belongs to the snaclec family. As to quaternary structure, heterodimer of subunits alpha and beta; disulfide-linked. Expressed by the venom gland.

It localises to the secreted. Platelet antagonist that specifically and reversibly binds to a site on platelet glycoprotein Ibalpha (GP1BA) close to or identical with the site for vWF binding. It inhibits the binding of vWF to platelets and vWF-dependent shear-induced platelet aggregation. This is Snaclec tokaracetin subunit alpha from Protobothrops tokarensis (Tokara habu).